We begin with the raw amino-acid sequence, 108 residues long: Large ribosomal subunit protein uL22 (108 aa).

Belongs to the universal ribosomal protein uL22 family. In terms of assembly, part of the 50S ribosomal subunit.

In terms of biological role, this protein binds specifically to 23S rRNA; its binding is stimulated by other ribosomal proteins, e.g. L4, L17, and L20. It is important during the early stages of 50S assembly. It makes multiple contacts with different domains of the 23S rRNA in the assembled 50S subunit and ribosome. The globular domain of the protein is located near the polypeptide exit tunnel on the outside of the subunit, while an extended beta-hairpin is found that lines the wall of the exit tunnel in the center of the 70S ribosome. This Desulfatibacillum aliphaticivorans protein is Large ribosomal subunit protein uL22.